Here is a 356-residue protein sequence, read N- to C-terminus: Inositol phosphoceramide mannosyltransferase 3 (356 aa).

Residues 4–24 (ILFYFFFFLTLILSATVYLFG) traverse the membrane as a helical segment. Asn-52 and Asn-146 each carry an N-linked (GlcNAc...) asparagine glycan. Transmembrane regions (helical) follow at residues 197-217 (FPYLTVMYSTGPLFLSIIWSA) and 269-289 (WAIFTFLGFLTFFIVVYFIFG). A phosphoserine mark is found at Ser-307, Ser-353, and Ser-355.

This sequence belongs to the glycosyltransferase 32 family.

It is found in the endoplasmic reticulum membrane. Its subcellular location is the golgi apparatus. The protein resides in the cis-Golgi network membrane. The protein localises to the trans-Golgi network membrane. With imt1 and imt2, is required for the synthesis of mannosylinositol phosphoceramide (MIPC). Catalyzes the addition of mannosyl to inositol phosphoceramide (IPC). MIPC is essential for cell morphology, cell-surface distribution of ergosterol, localization for plasma-membrane transporters, and lipid-raft-mediated endocytosis of plasma membrane proteins to the vacuole. The sequence is that of Inositol phosphoceramide mannosyltransferase 3 from Schizosaccharomyces pombe (strain 972 / ATCC 24843) (Fission yeast).